Here is a 33-residue protein sequence, read N- to C-terminus: DNA-directed RNA polymerase subunit beta' (33 aa).

The protein belongs to the RNA polymerase beta' chain family. RpoC1 subfamily. As to quaternary structure, in plastids the minimal PEP RNA polymerase catalytic core is composed of four subunits: alpha, beta, beta', and beta''. When a (nuclear-encoded) sigma factor is associated with the core the holoenzyme is formed, which can initiate transcription.

Its subcellular location is the plastid. It is found in the chloroplast. It carries out the reaction RNA(n) + a ribonucleoside 5'-triphosphate = RNA(n+1) + diphosphate. Its function is as follows. DNA-dependent RNA polymerase catalyzes the transcription of DNA into RNA using the four ribonucleoside triphosphates as substrates. The sequence is that of DNA-directed RNA polymerase subunit beta' (rpoC1) from Heterosigma akashiwo (Chromophytic alga).